The chain runs to 152 residues: Large ribosomal subunit protein bL9 (152 aa).

The protein belongs to the bacterial ribosomal protein bL9 family.

Functionally, binds to the 23S rRNA. The polypeptide is Large ribosomal subunit protein bL9 (Saccharophagus degradans (strain 2-40 / ATCC 43961 / DSM 17024)).